The chain runs to 103 residues: TMWGTKWCGSGNKAINYTDLGYFSNLDSCCRTHDHCDNIAAGETKYGLTNEGKYTMMNCKCEATFQQCLRDVHGPLEGKAAFTIRKLYFGLYGNGCFNVQCPS.

Trp7, Gly9, and Gly11 together coordinate Ca(2+). 4 disulfides stabilise this stretch: Cys8–Cys30, Cys29–Cys68, Cys36–Cys61, and Cys59–Cys96. A glycan (N-linked (GlcNAc...) asparagine) is linked at Asn16. His33 is an active-site residue. Asp34 contacts Ca(2+).

This sequence belongs to the phospholipase A2 family. Group III subfamily. In terms of assembly, heterodimer composed of a large subunit and a small subunit; disulfide-linked. Requires Ca(2+) as cofactor. In terms of tissue distribution, expressed by the venom gland.

The protein localises to the secreted. The catalysed reaction is a 1,2-diacyl-sn-glycero-3-phosphocholine + H2O = a 1-acyl-sn-glycero-3-phosphocholine + a fatty acid + H(+). Its function is as follows. Phospholipase toxin, which catalyzes the calcium-dependent hydrolysis of the 2-acyl groups in 3-sn-phosphoglycerides. Inhibits both skeletal (RYR1) and cardiac (RYR2) ryanodine receptors (calcium release channels). Probably blocks ryanodine receptors by generating a lipid product. The polypeptide is Phospholipase A2 large subunit (Chersonesometrus fulvipes (Indian black scorpion)).